The chain runs to 122 residues: Large ribosomal subunit protein uL14 (122 aa).

It belongs to the universal ribosomal protein uL14 family. In terms of assembly, part of the 50S ribosomal subunit. Forms a cluster with proteins L3 and L19. In the 70S ribosome, L14 and L19 interact and together make contacts with the 16S rRNA in bridges B5 and B8.

Binds to 23S rRNA. Forms part of two intersubunit bridges in the 70S ribosome. The polypeptide is Large ribosomal subunit protein uL14 (Nitratiruptor sp. (strain SB155-2)).